The primary structure comprises 158 residues: MHEGVQVSSKLEELQALLAPVVVALGYECWGIEFSAQGRHSMLRVYIDKEGGVLVDDCAIVSRQISGVLDVEDPISVEYTLEVSSPGMERPLFTLEQFAKYVGEQVKIKLRSPFEGRRNFQGLLRGVEEQDVVVQVENHEFLLPIDMIDKANIIPSFD.

This sequence belongs to the RimP family.

It is found in the cytoplasm. Required for maturation of 30S ribosomal subunits. This is Ribosome maturation factor RimP from Pseudomonas fluorescens (strain Pf0-1).